Here is a 370-residue protein sequence, read N- to C-terminus: Pyrimidine monooxygenase RutA (370 aa).

FMN contacts are provided by residues 49–50 (IK), asparagine 115, glutamate 124, 140–141 (RY), and serine 190.

It belongs to the NtaA/SnaA/DszA monooxygenase family. RutA subfamily.

The enzyme catalyses uracil + FMNH2 + NADH + O2 = (Z)-3-ureidoacrylate + FMN + NAD(+) + H2O + H(+). The catalysed reaction is thymine + FMNH2 + NADH + O2 = (Z)-2-methylureidoacrylate + FMN + NAD(+) + H2O + H(+). Functionally, catalyzes the pyrimidine ring opening between N-3 and C-4 by an unusual flavin hydroperoxide-catalyzed mechanism, adding oxygen atoms in the process to yield ureidoacrylate peracid, that immediately reacts with FMN forming ureidoacrylate and FMN-N(5)-oxide. The FMN-N(5)-oxide reacts spontaneously with NADH to produce FMN. Requires the flavin reductase RutF to regenerate FMN in vivo. In Variovorax paradoxus (strain S110), this protein is Pyrimidine monooxygenase RutA.